Consider the following 214-residue polypeptide: Zinc finger protein 11 (214 aa).

A disordered region spans residues 1 to 27 (MKRTHLASFSNRDKTQEEEGEDGNGDN). The segment at 49–71 (YTCSFCRREFRSAQALGGHMNVH) adopts a C2H2-type zinc-finger fold. Positions 72–79 (RRDRAKLR) match the Nuclear localization signal motif. The tract at residues 89 to 130 (HHHTPIANPNPNFSSSSSSSTTTAHLEPSLTNQRSKTTPFPS) is disordered. The segment covering 102–111 (SSSSSSSTTT) has biased composition (low complexity). Residues 117–128 (SLTNQRSKTTPF) show a composition bias toward polar residues.

As to expression, expressed in roots, stems, axillary buds and flowers.

It is found in the nucleus. Its function is as follows. Probable transcription factor that may regulate cell division and growth. This Arabidopsis thaliana (Mouse-ear cress) protein is Zinc finger protein 11.